Reading from the N-terminus, the 534-residue chain is Pentatricopeptide repeat-containing protein At2g20540 (534 aa).

11 PPR repeats span residues serine 41–proline 71, asparagine 72–leucine 106, aspartate 108–phenylalanine 142, histidine 143–arginine 173, aspartate 174–serine 208, tryptophan 209–proline 239, aspartate 240–lysine 274, glutamine 275–lysine 305, aspartate 306–proline 340, asparagine 341–aspartate 371, and lysine 377–lysine 407. Residues isoleucine 412–asparagine 487 are type E motif. The interval asparagine 488–aspartate 518 is type E(+) motif.

The protein belongs to the PPR family. PCMP-E subfamily.

The sequence is that of Pentatricopeptide repeat-containing protein At2g20540 (PCMP-E78) from Arabidopsis thaliana (Mouse-ear cress).